Here is a 354-residue protein sequence, read N- to C-terminus: tRNA N6-adenosine threonylcarbamoyltransferase (354 aa).

Residues His115 and His119 each contribute to the Fe cation site. Substrate is bound by residues 138-142 (LVSGG), Asp171, Gly184, and Asn276. Asp304 is a binding site for Fe cation.

The protein belongs to the KAE1 / TsaD family. Requires Fe(2+) as cofactor.

The protein resides in the cytoplasm. It carries out the reaction L-threonylcarbamoyladenylate + adenosine(37) in tRNA = N(6)-L-threonylcarbamoyladenosine(37) in tRNA + AMP + H(+). Functionally, required for the formation of a threonylcarbamoyl group on adenosine at position 37 (t(6)A37) in tRNAs that read codons beginning with adenine. Is involved in the transfer of the threonylcarbamoyl moiety of threonylcarbamoyl-AMP (TC-AMP) to the N6 group of A37, together with TsaE and TsaB. TsaD likely plays a direct catalytic role in this reaction. In Xanthomonas oryzae pv. oryzae (strain MAFF 311018), this protein is tRNA N6-adenosine threonylcarbamoyltransferase.